The primary structure comprises 64 residues: Potassium channel toxin kappa-KTx 4.1 (64 aa).

The signal sequence occupies residues 1-26; it reads MKSTLMTASLLILVVLFIIDYASVYA. Residues 27 to 38 constitute a propeptide that is removed on maturation; sequence EFIDGEISLERE. 2 cysteine pairs are disulfide-bonded: Cys43–Cys61 and Cys47–Cys57.

The protein belongs to the short scorpion toxin superfamily. Potassium channel inhibitor kappa-KTx family. Kappa-KTx 4 subfamily. Expressed by the venom gland.

Its subcellular location is the secreted. Potassium channel inhibitor (Kv). In Heterometrus petersii (Asian forest scorpion), this protein is Potassium channel toxin kappa-KTx 4.1.